The primary structure comprises 370 residues: DnaJ homolog subfamily B member 12 (370 aa).

Residue Met1 is modified to N-acetylmethionine. The tract at residues 51-92 (NQKPQPAGDQPQPTEATHTTHRKAAGANTASANGEAGGESTK) is disordered. The J domain maps to 110-174 (DYYEILGVSR…EKRKQYDQFG (65 aa)). Pros-methylhistidine is present on His185. A helical transmembrane segment spans residues 242 to 262 (GGLGVFVQLMPILILILVSAL).

The protein belongs to the DnaJ family. DNAJB12/DNAJB14 subfamily. In terms of assembly, homodimer and homotetramer. Interacts (via J domain) with HSPA8/Hsc70. Forms a multiprotein complex, at least composed of DNAJB12, DNAJB14, HSPA8/Hsc70 and SGTA; interaction with DNAJB14 and HSPA8/Hsc70 is direct. Post-translationally, methylated at His-185 by METTL9.

The protein localises to the endoplasmic reticulum membrane. It is found in the nucleus membrane. Acts as a co-chaperone with HSPA8/Hsc70; required to promote protein folding and trafficking, prevent aggregation of client proteins, and promote unfolded proteins to endoplasmic reticulum-associated degradation (ERAD) pathway. Acts by determining HSPA8/Hsc70's ATPase and polypeptide-binding activities. Can also act independently of HSPA8/Hsc70: together with DNAJB14, acts as a chaperone that promotes maturation of potassium channels KCND2 and KCNH2 by stabilizing nascent channel subunits and assembling them into tetramers. While stabilization of nascent channel proteins is dependent on HSPA8/Hsc70, the process of oligomerization of channel subunits is independent of HSPA8/Hsc70. When overexpressed, forms membranous structures together with DNAJB14 and HSPA8/Hsc70 within the nucleus; the role of these structures, named DJANGOs, is still unclear. The polypeptide is DnaJ homolog subfamily B member 12 (DNAJB12) (Bos taurus (Bovine)).